Consider the following 304-residue polypeptide: UDP-3-O-acyl-N-acetylglucosamine deacetylase (304 aa).

Zn(2+) contacts are provided by H78, H237, and D241. H264 acts as the Proton donor in catalysis.

This sequence belongs to the LpxC family. Zn(2+) is required as a cofactor.

The enzyme catalyses a UDP-3-O-[(3R)-3-hydroxyacyl]-N-acetyl-alpha-D-glucosamine + H2O = a UDP-3-O-[(3R)-3-hydroxyacyl]-alpha-D-glucosamine + acetate. It participates in glycolipid biosynthesis; lipid IV(A) biosynthesis; lipid IV(A) from (3R)-3-hydroxytetradecanoyl-[acyl-carrier-protein] and UDP-N-acetyl-alpha-D-glucosamine: step 2/6. Its function is as follows. Catalyzes the hydrolysis of UDP-3-O-myristoyl-N-acetylglucosamine to form UDP-3-O-myristoylglucosamine and acetate, the committed step in lipid A biosynthesis. In Xylella fastidiosa (strain 9a5c), this protein is UDP-3-O-acyl-N-acetylglucosamine deacetylase.